The chain runs to 342 residues: uncharacterized protein (342 aa).

Helical transmembrane passes span 8–28, 39–59, 79–99, 108–128, 142–162, 175–195, 207–227, 242–262, 276–296, and 304–324; these read FESS…TSLF, ISFL…MLWI, SSFS…FILI, IFWV…PFYM, GWYI…LIMP, INYF…AVVI, AMAP…VALI, FYIF…MAII, AMSW…THLV, and IVDY…IVTL.

It belongs to the tellurite-resistance/dicarboxylate transporter (TDT) family.

Its subcellular location is the cell membrane. This is an uncharacterized protein from Methanocaldococcus jannaschii (strain ATCC 43067 / DSM 2661 / JAL-1 / JCM 10045 / NBRC 100440) (Methanococcus jannaschii).